A 491-amino-acid polypeptide reads, in one-letter code: Glutamyl-tRNA(Gln) amidotransferase subunit A (491 aa).

Residue serine 158 is the Charge relay system of the active site. Serine 182 functions as the Acyl-ester intermediate in the catalytic mechanism.

Belongs to the amidase family. GatA subfamily. Heterotrimer of A, B and C subunits.

The catalysed reaction is L-glutamyl-tRNA(Gln) + L-glutamine + ATP + H2O = L-glutaminyl-tRNA(Gln) + L-glutamate + ADP + phosphate + H(+). In terms of biological role, allows the formation of correctly charged Gln-tRNA(Gln) through the transamidation of misacylated Glu-tRNA(Gln) in organisms which lack glutaminyl-tRNA synthetase. The reaction takes place in the presence of glutamine and ATP through an activated gamma-phospho-Glu-tRNA(Gln). The polypeptide is Glutamyl-tRNA(Gln) amidotransferase subunit A (Bradyrhizobium diazoefficiens (strain JCM 10833 / BCRC 13528 / IAM 13628 / NBRC 14792 / USDA 110)).